The following is a 432-amino-acid chain: Serine/threonine-protein kinase CDG1 (432 aa).

S-palmitoyl cysteine attachment occurs at residues cysteine 4 and cysteine 6. A compositionally biased stretch (basic residues) spans 15-24 (LKDKSHKRSI). The interval 15–47 (LKDKSHKRSIRNQTSSSSAQPAGTAKEVDSSSS) is disordered. Polar residues predominate over residues 25-35 (RNQTSSSSAQP). 2 positions are modified to phosphoserine: serine 44 and serine 47. Positions 74 to 354 (FRNESLIGRG…SQVVECLKYI (281 aa)) constitute a Protein kinase domain. ATP is bound by residues 80–88 (IGRGGFGTV) and lysine 102. A Phosphotyrosine modification is found at tyrosine 147. Aspartate 200 acts as the Proton acceptor in catalysis. Phosphoserine is present on residues serine 204 and serine 234. A phosphothreonine mark is found at threonine 235 and threonine 240. Tyrosine 248 is subject to Phosphotyrosine.

This sequence belongs to the protein kinase superfamily. Ser/Thr protein kinase family. In terms of assembly, interacts with BSU1, BSL1 and BRI1. Phosphorylated at Ser-44, Ser-47 and Ser-234 by BRI1. Expressed at high levels in the stamen and pollen grains. Expressed at a very low level in vegetative tissues.

The protein localises to the cell membrane. It carries out the reaction L-seryl-[protein] + ATP = O-phospho-L-seryl-[protein] + ADP + H(+). It catalyses the reaction L-threonyl-[protein] + ATP = O-phospho-L-threonyl-[protein] + ADP + H(+). With respect to regulation, activated by phosphorylation at Ser-234. In terms of biological role, serine/threonine-protein kinase involved in the positive regulation of brassinosteroid (BR) signaling and plant growth. Mediates BR signal transduction from BRI1 receptor kinase to BSU1 phosphatase. After activation by phosphorylation at Ser-234 by BRI1, CDG1 phosphorylates BSU1 at 'Ser-764' in the phosphatase domain, increasing the ability of BSU1 to inactivate the negative regulator of BR signaling ASK7/BIN2 by dephosphorylation at 'Tyr-200'. The full kinase activity of CDG1 is required for its biological function. The polypeptide is Serine/threonine-protein kinase CDG1 (Arabidopsis thaliana (Mouse-ear cress)).